The primary structure comprises 147 residues: Large ribosomal subunit protein bL9 (147 aa).

Belongs to the bacterial ribosomal protein bL9 family.

In terms of biological role, binds to the 23S rRNA. The sequence is that of Large ribosomal subunit protein bL9 from Thermodesulfovibrio yellowstonii (strain ATCC 51303 / DSM 11347 / YP87).